We begin with the raw amino-acid sequence, 206 residues long: 2,3-bisphosphoglycerate-dependent phosphoglycerate mutase (206 aa).

Substrate-binding positions include 9–16, 22–23, arginine 61, 88–91, lysine 99, 115–116, and 159–160; these read RHGQSEWN, TG, ERDY, RR, and GN. The active-site Tele-phosphohistidine intermediate is the histidine 10. The active-site Proton donor/acceptor is the glutamate 88.

It belongs to the phosphoglycerate mutase family. BPG-dependent PGAM subfamily. In terms of assembly, homodimer.

The enzyme catalyses (2R)-2-phosphoglycerate = (2R)-3-phosphoglycerate. The protein operates within carbohydrate degradation; glycolysis; pyruvate from D-glyceraldehyde 3-phosphate: step 3/5. In terms of biological role, catalyzes the interconversion of 2-phosphoglycerate and 3-phosphoglycerate. This chain is 2,3-bisphosphoglycerate-dependent phosphoglycerate mutase, found in Brucella abortus (strain S19).